The following is a 294-amino-acid chain: Nucleotide-binding protein CLJ_B3680 (294 aa).

Residue 8–15 (GLSGAGKT) coordinates ATP. GTP is bound at residue 59–62 (DIRG).

This sequence belongs to the RapZ-like family.

Its function is as follows. Displays ATPase and GTPase activities. In Clostridium botulinum (strain 657 / Type Ba4), this protein is Nucleotide-binding protein CLJ_B3680.